The sequence spans 193 residues: Putative nitroreductase HBN1 (193 aa).

N-acetylserine is present on serine 2.

It belongs to the nitroreductase family. It depends on FMN as a cofactor.

The protein localises to the cytoplasm. The protein resides in the nucleus. The sequence is that of Putative nitroreductase HBN1 (HBN1) from Saccharomyces cerevisiae (strain ATCC 204508 / S288c) (Baker's yeast).